A 486-amino-acid polypeptide reads, in one-letter code: tRNA sulfurtransferase (486 aa).

Residues 61-165 form the THUMP domain; sequence AILIDVLGRI…NDHMMLIKAR (105 aa). ATP is bound by residues 183 to 184, lysine 265, glycine 287, and glutamine 296; that span reads LI. Cysteine 344 and cysteine 456 form a disulfide bridge. The region spanning 404–481 is the Rhodanese domain; sequence LSANDVILDI…NGFANVRVFA (78 aa). Residue cysteine 456 is the Cysteine persulfide intermediate of the active site.

This sequence belongs to the ThiI family.

Its subcellular location is the cytoplasm. It carries out the reaction [ThiI sulfur-carrier protein]-S-sulfanyl-L-cysteine + a uridine in tRNA + 2 reduced [2Fe-2S]-[ferredoxin] + ATP + H(+) = [ThiI sulfur-carrier protein]-L-cysteine + a 4-thiouridine in tRNA + 2 oxidized [2Fe-2S]-[ferredoxin] + AMP + diphosphate. The enzyme catalyses [ThiS sulfur-carrier protein]-C-terminal Gly-Gly-AMP + S-sulfanyl-L-cysteinyl-[cysteine desulfurase] + AH2 = [ThiS sulfur-carrier protein]-C-terminal-Gly-aminoethanethioate + L-cysteinyl-[cysteine desulfurase] + A + AMP + 2 H(+). The protein operates within cofactor biosynthesis; thiamine diphosphate biosynthesis. In terms of biological role, catalyzes the ATP-dependent transfer of a sulfur to tRNA to produce 4-thiouridine in position 8 of tRNAs, which functions as a near-UV photosensor. Also catalyzes the transfer of sulfur to the sulfur carrier protein ThiS, forming ThiS-thiocarboxylate. This is a step in the synthesis of thiazole, in the thiamine biosynthesis pathway. The sulfur is donated as persulfide by IscS. This Mannheimia succiniciproducens (strain KCTC 0769BP / MBEL55E) protein is tRNA sulfurtransferase.